The following is a 483-amino-acid chain: MARAIMFQGTGSDVGKSVLVAGLCRVARNRGLKVRPFKPQNMSNNAAVSDDGGEIGRAQWLQALACGVPSSVHMNPVLLKPQTDMGSQLIVQGQVRGEARGRYYQELKPQLMAAVMESFAKVGDGADLVLVEGAGSPAEINLRAGDIANMGFATHADVPVVLVGDIDRGGVIASLVGTHTILPQEDRAMVRGFLINKFRGDISLFDDGLAAITRFTGWRSFGVVPWLKAVSRLPAEDSVVLERAVRGDKKALIVAVPMLPRIANFDDLDPLKAEPAVEVVMVPPGSSLPADAGLVVLPGTKSTIADLLALRENGWDRELVAHVKRGGHVLGICGGFQMLGRRISDPAGIEGNVRDIEGLGLLDIETMTEPEKVVRNVEAVSLLHDEPLEGYEIHIGRTSGPDMARPFARIGDHDDGAVSPDGRIMGTYLHGIFSADRFRHHFLRALGVEGGQMNYRESVEEALGELAEGLEASLDIDGLFALA.

Positions 251-438 constitute a GATase cobBQ-type domain; sequence ALIVAVPMLP…LHGIFSADRF (188 aa). C333 serves as the catalytic Nucleophile. The active site involves H430.

Belongs to the CobB/CobQ family. CobQ subfamily.

The protein operates within cofactor biosynthesis; adenosylcobalamin biosynthesis. In terms of biological role, catalyzes amidations at positions B, D, E, and G on adenosylcobyrinic A,C-diamide. NH(2) groups are provided by glutamine, and one molecule of ATP is hydrogenolyzed for each amidation. The sequence is that of Cobyric acid synthase from Brucella abortus (strain S19).